A 390-amino-acid polypeptide reads, in one-letter code: NADH-quinone oxidoreductase subunit D (390 aa).

The protein belongs to the complex I 49 kDa subunit family. As to quaternary structure, NDH-1 is composed of 14 different subunits. Subunits NuoB, C, D, E, F, and G constitute the peripheral sector of the complex.

It localises to the cell inner membrane. The catalysed reaction is a quinone + NADH + 5 H(+)(in) = a quinol + NAD(+) + 4 H(+)(out). Functionally, NDH-1 shuttles electrons from NADH, via FMN and iron-sulfur (Fe-S) centers, to quinones in the respiratory chain. The immediate electron acceptor for the enzyme in this species is believed to be ubiquinone. Couples the redox reaction to proton translocation (for every two electrons transferred, four hydrogen ions are translocated across the cytoplasmic membrane), and thus conserves the redox energy in a proton gradient. The polypeptide is NADH-quinone oxidoreductase subunit D (Geotalea uraniireducens (strain Rf4) (Geobacter uraniireducens)).